Consider the following 449-residue polypeptide: MKKFRARYAPSPTGHLHIGNARTALFNYLFARHHGGDFIIRIEDTDVARNVEGGITSQLNNLKWLGMDWDEGVDVGGSFGPYNQLSRLELYKKYAFELLEKGYAYKDFKEGSEDFAIRFKVPENVLYEFDDVIRGTLKFESKDVEDWIILKDNGIPTYNFAVVIDDHYMEITHVFRGEEHITNTPKQLMVYDALGWEYPTFGHMTIIVNEDRKKLSKRDTNTIQFIEDYKNLGFLPEAMLNFLSLLGWSPKDDEEILSKEELISLFDEHRLSAAPSYFDKQKLAYINSRYLKALSMDELKDLTRPFLINHGIEIKNEAWLESLLSILKDRLSYGAEITKYYDQFFHHDFVLEPAVLEEIKEFDNEVVIKGFMGAISSVDFTDDVAINQALKDTGKALNIKGKPLFMPIRIATTGEAHGPSLPVSLSLLGKELVIKRMNKTLEVLKGETK.

A 'HIGH' region motif is present at residues 10–20 (PSPTGHLHIGN). The short motif at 214 to 218 (KLSKR) is the 'KMSKS' region element. K217 is an ATP binding site.

It belongs to the class-I aminoacyl-tRNA synthetase family. Glutamate--tRNA ligase type 1 subfamily. In terms of assembly, monomer.

It is found in the cytoplasm. The catalysed reaction is tRNA(Glu) + L-glutamate + ATP = L-glutamyl-tRNA(Glu) + AMP + diphosphate. Functionally, catalyzes the attachment of glutamate to tRNA(Glu) in a two-step reaction: glutamate is first activated by ATP to form Glu-AMP and then transferred to the acceptor end of tRNA(Glu). The sequence is that of Glutamate--tRNA ligase from Acholeplasma laidlawii (strain PG-8A).